Consider the following 171-residue polypeptide: ATP synthase subunit b (171 aa).

The chain crosses the membrane as a helical span at residues 31-51; the sequence is FFVVLAIFLVVLAVIGTFVVP.

The protein belongs to the ATPase B chain family. F-type ATPases have 2 components, F(1) - the catalytic core - and F(0) - the membrane proton channel. F(1) has five subunits: alpha(3), beta(3), gamma(1), delta(1), epsilon(1). F(0) has three main subunits: a(1), b(2) and c(10-14). The alpha and beta chains form an alternating ring which encloses part of the gamma chain. F(1) is attached to F(0) by a central stalk formed by the gamma and epsilon chains, while a peripheral stalk is formed by the delta and b chains.

The protein localises to the cell membrane. Its function is as follows. F(1)F(0) ATP synthase produces ATP from ADP in the presence of a proton or sodium gradient. F-type ATPases consist of two structural domains, F(1) containing the extramembraneous catalytic core and F(0) containing the membrane proton channel, linked together by a central stalk and a peripheral stalk. During catalysis, ATP synthesis in the catalytic domain of F(1) is coupled via a rotary mechanism of the central stalk subunits to proton translocation. Component of the F(0) channel, it forms part of the peripheral stalk, linking F(1) to F(0). This Mycobacterium bovis (strain ATCC BAA-935 / AF2122/97) protein is ATP synthase subunit b.